The following is a 1225-amino-acid chain: Cytosolic carboxypeptidase 1 (1225 aa).

The span at 366-392 (DDVVDESDDNEDTDAETEAEAENEDSD) shows a compositional bias: acidic residues. Residues 366-398 (DDVVDESDDNEDTDAETEAEAENEDSDQICKND) are disordered. One can recognise a Peptidase M14 domain in the interval 842–1132 (YPYTYSTLKM…KFCVGLLRLK (291 aa)). Zn(2+)-binding residues include His-914, Glu-917, and His-1011. The Proton donor/acceptor role is filled by Glu-1096. The span at 1181 to 1193 (YSAESNDDVDPDL) shows a compositional bias: acidic residues. A disordered region spans residues 1181–1225 (YSAESNDDVDPDLPENIGDFETSTLEEESFSDSEITRTHMSGQST).

It belongs to the peptidase M14 family. Zn(2+) is required as a cofactor.

It localises to the cytoplasm. The protein localises to the cytosol. The protein resides in the nucleus. It is found in the mitochondrion. The enzyme catalyses (L-glutamyl)(n+1)-gamma-L-glutamyl-L-glutamyl-[protein] + H2O = (L-glutamyl)(n)-gamma-L-glutamyl-L-glutamyl-[protein] + L-glutamate. It catalyses the reaction C-terminal L-alpha-aminoacyl-L-glutamyl-L-glutamyl-[tubulin] + H2O = C-terminal L-alpha-aminoacyl-L-glutamyl-[tubulin] + L-glutamate. Metallocarboxypeptidase that mediates protein deglutamylation of tubulin and non-tubulin target proteins. Catalyzes the removal of polyglutamate side chains present on the gamma-carboxyl group of glutamate residues within the C-terminal tail of alpha- and beta-tubulin. Specifically cleaves tubulin long-side-chains, while it is not able to remove the branching point glutamate. Also catalyzes the removal of polyglutamate residues from the carboxy-terminus of alpha-tubulin as well as non-tubulin proteins. This chain is Cytosolic carboxypeptidase 1 (agtpbp1), found in Xenopus laevis (African clawed frog).